We begin with the raw amino-acid sequence, 257 residues long: Acetylglutamate kinase (257 aa).

Residues 43–44 (GG), arginine 65, and asparagine 157 each bind substrate. ATP-binding positions include 180–185 (DISGIL) and 208–210 (IIT).

Belongs to the acetylglutamate kinase family. ArgB subfamily. In terms of assembly, homodimer.

Its subcellular location is the cytoplasm. The catalysed reaction is N-acetyl-L-glutamate + ATP = N-acetyl-L-glutamyl 5-phosphate + ADP. Its pathway is amino-acid biosynthesis; L-arginine biosynthesis; N(2)-acetyl-L-ornithine from L-glutamate: step 2/4. Functionally, catalyzes the ATP-dependent phosphorylation of N-acetyl-L-glutamate. This chain is Acetylglutamate kinase, found in Sodalis glossinidius (strain morsitans).